The sequence spans 232 residues: LexA repressor (232 aa).

Residues 36 to 56 (IREIGDAAGLQSTSSVAYQLK) constitute a DNA-binding region (H-T-H motif). A compositionally biased stretch (basic and acidic residues) spans 62–86 (GFLRRDPNKPRAVDVRHLPETDNRT). Residues 62–107 (GFLRRDPNKPRAVDVRHLPETDNRTKAGPKAKARPTAGASPQPELA) form a disordered region. Active-site for autocatalytic cleavage activity residues include S156 and K193.

The protein belongs to the peptidase S24 family. Homodimer.

The enzyme catalyses Hydrolysis of Ala-|-Gly bond in repressor LexA.. In terms of biological role, represses a number of genes involved in the response to DNA damage (SOS response), including recA and lexA. In the presence of single-stranded DNA, RecA interacts with LexA causing an autocatalytic cleavage which disrupts the DNA-binding part of LexA, leading to derepression of the SOS regulon and eventually DNA repair. This is LexA repressor from Corynebacterium efficiens (strain DSM 44549 / YS-314 / AJ 12310 / JCM 11189 / NBRC 100395).